A 726-amino-acid polypeptide reads, in one-letter code: Phenylalanine--tRNA ligase beta subunit (726 aa).

Positions 38 to 150 constitute a tRNA-binding domain; it reads FSSSKGLLFA…NFASLNDDAS (113 aa). Positions 394-467 constitute a B5 domain; the sequence is DKKVEINFDE…RFYNYDNFKE (74 aa). The Mg(2+) site is built by aspartate 445, aspartate 451, glutamate 454, and glutamate 455.

This sequence belongs to the phenylalanyl-tRNA synthetase beta subunit family. Type 1 subfamily. As to quaternary structure, tetramer of two alpha and two beta subunits. Mg(2+) serves as cofactor.

The protein localises to the cytoplasm. The enzyme catalyses tRNA(Phe) + L-phenylalanine + ATP = L-phenylalanyl-tRNA(Phe) + AMP + diphosphate + H(+). The polypeptide is Phenylalanine--tRNA ligase beta subunit (Mycoplasmopsis synoviae (strain 53) (Mycoplasma synoviae)).